A 518-amino-acid chain; its full sequence is GMP synthase [glutamine-hydrolyzing] (518 aa).

The 195-residue stretch at 6–200 (RLLIIDFGSQ…FVRLAGFKGD (195 aa)) folds into the Glutamine amidotransferase type-1 domain. Cys84 functions as the Nucleophile in the catalytic mechanism. Active-site residues include His175 and Glu177. Positions 201–393 (WTMGAYREEA…LGLPESFIGR (193 aa)) constitute a GMPS ATP-PPase domain. Residue 228–234 (SGGVDSS) coordinates ATP.

In terms of assembly, homodimer.

It catalyses the reaction XMP + L-glutamine + ATP + H2O = GMP + L-glutamate + AMP + diphosphate + 2 H(+). It functions in the pathway purine metabolism; GMP biosynthesis; GMP from XMP (L-Gln route): step 1/1. In terms of biological role, catalyzes the synthesis of GMP from XMP. This chain is GMP synthase [glutamine-hydrolyzing], found in Cereibacter sphaeroides (strain ATCC 17029 / ATH 2.4.9) (Rhodobacter sphaeroides).